Consider the following 416-residue polypeptide: Subtilisin-like protease 12 (416 aa).

A signal peptide spans 1 to 19 (MSILKMMLIYFAIFWVVNA). A propeptide spanning residues 20–116 (AQLLDIDSQG…VEPNKEMQVA (97 aa)) is cleaved from the precursor. Residues 35-115 (YIVVMKDRVS…FVEPNKEMQV (81 aa)) form the Inhibitor I9 domain. 3 N-linked (GlcNAc...) asparagine glycosylation sites follow: asparagine 123, asparagine 136, and asparagine 150. Residues 125-416 (TWGLSRISHK…NKLLYNGSGA (292 aa)) form the Peptidase S8 domain. Catalysis depends on charge relay system residues aspartate 157 and histidine 188. 4 N-linked (GlcNAc...) asparagine glycosylation sites follow: asparagine 249, asparagine 305, asparagine 334, and asparagine 353. The Charge relay system role is filled by serine 362. Residues asparagine 404 and asparagine 412 are each glycosylated (N-linked (GlcNAc...) asparagine).

Belongs to the peptidase S8 family.

The protein resides in the secreted. Its function is as follows. Secreted subtilisin-like serine protease with keratinolytic activity that contributes to pathogenicity. In Arthroderma benhamiae (strain ATCC MYA-4681 / CBS 112371) (Trichophyton mentagrophytes), this protein is Subtilisin-like protease 12 (SUB12).